Here is a 50-residue protein sequence, read N- to C-terminus: Large ribosomal subunit protein bL33 (50 aa).

This sequence belongs to the bacterial ribosomal protein bL33 family.

The sequence is that of Large ribosomal subunit protein bL33 from Endomicrobium trichonymphae.